Here is a 91-residue protein sequence, read N- to C-terminus: uncharacterized protein (91 aa).

A signal peptide spans 1–20 (MFSRVLALLAVLLLSANTWA).

This sequence belongs to the BhsA/McbA family.

The protein resides in the periplasm. This is an uncharacterized protein from Escherichia coli O157:H7.